A 283-amino-acid chain; its full sequence is Cyclin-C (283 aa).

The 99-residue stretch at 46–144 (NVIQALGEHL…ILECEFYLLE (99 aa)) folds into the Cyclin N-terminal domain. Residues 252–283 (SILSKMPKPKPPPNSDGEQGTNGSQSSGYSQS) are disordered. Over residues 267–283 (DGEQGTNGSQSSGYSQS) the composition is skewed to polar residues.

This sequence belongs to the cyclin family. Cyclin C subfamily. In terms of assembly, component of the Mediator complex. The cylin/CDK pair formed by ccnc/cdk8 also associates with the large subunit of RNA polymerase II.

It is found in the nucleus. Component of the Mediator complex, a coactivator involved in regulated gene transcription of nearly all RNA polymerase II-dependent genes. Mediator functions as a bridge to convey information from gene-specific regulatory proteins to the basal RNA polymerase II transcription machinery. Mediator is recruited to promoters by direct interactions with regulatory proteins and serves as a scaffold for the assembly of a functional preinitiation complex with RNA polymerase II and the general transcription factors. Binds to and activates cyclin-dependent kinase cdk8 that phosphorylates the CTD (C-terminal domain) of the large subunit of RNA polymerase II (RNAp II), which may inhibit the formation of a transcription initiation complex. This is Cyclin-C (ccnc) from Xenopus laevis (African clawed frog).